The following is a 457-amino-acid chain: Bifunctional protein GlmU (457 aa).

Residues M1–R228 are pyrophosphorylase. UDP-N-acetyl-alpha-D-glucosamine-binding positions include L9–G12, K23, Q73, and G78–T79. A Mg(2+)-binding site is contributed by D102. The UDP-N-acetyl-alpha-D-glucosamine site is built by G139, E154, N169, and N226. A Mg(2+)-binding site is contributed by N226. A linker region spans residues V229–N249. The tract at residues G250 to L457 is N-acetyltransferase. UDP-N-acetyl-alpha-D-glucosamine-binding residues include R331 and K349. H361 functions as the Proton acceptor in the catalytic mechanism. Y364 and N375 together coordinate UDP-N-acetyl-alpha-D-glucosamine. Acetyl-CoA contacts are provided by residues N384–Y385, A421, and R438.

The protein in the N-terminal section; belongs to the N-acetylglucosamine-1-phosphate uridyltransferase family. It in the C-terminal section; belongs to the transferase hexapeptide repeat family. Homotrimer. Mg(2+) is required as a cofactor.

The protein localises to the cytoplasm. The catalysed reaction is alpha-D-glucosamine 1-phosphate + acetyl-CoA = N-acetyl-alpha-D-glucosamine 1-phosphate + CoA + H(+). It catalyses the reaction N-acetyl-alpha-D-glucosamine 1-phosphate + UTP + H(+) = UDP-N-acetyl-alpha-D-glucosamine + diphosphate. The protein operates within nucleotide-sugar biosynthesis; UDP-N-acetyl-alpha-D-glucosamine biosynthesis; N-acetyl-alpha-D-glucosamine 1-phosphate from alpha-D-glucosamine 6-phosphate (route II): step 2/2. It participates in nucleotide-sugar biosynthesis; UDP-N-acetyl-alpha-D-glucosamine biosynthesis; UDP-N-acetyl-alpha-D-glucosamine from N-acetyl-alpha-D-glucosamine 1-phosphate: step 1/1. It functions in the pathway bacterial outer membrane biogenesis; LPS lipid A biosynthesis. Catalyzes the last two sequential reactions in the de novo biosynthetic pathway for UDP-N-acetylglucosamine (UDP-GlcNAc). The C-terminal domain catalyzes the transfer of acetyl group from acetyl coenzyme A to glucosamine-1-phosphate (GlcN-1-P) to produce N-acetylglucosamine-1-phosphate (GlcNAc-1-P), which is converted into UDP-GlcNAc by the transfer of uridine 5-monophosphate (from uridine 5-triphosphate), a reaction catalyzed by the N-terminal domain. The polypeptide is Bifunctional protein GlmU (Thermoanaerobacter pseudethanolicus (strain ATCC 33223 / 39E) (Clostridium thermohydrosulfuricum)).